A 412-amino-acid polypeptide reads, in one-letter code: cAMP-dependent protein kinase regulatory subunit (412 aa).

The span at 1–11 (MSNYSHSSNNP) shows a compositional bias: polar residues. The disordered stretch occupies residues 1-146 (MSNYSHSSNN…TPPSHPKSEE (146 aa)). The span at 16-29 (STKEDKPSSFHKIA) shows a compositional bias: basic and acidic residues. The interval 23 to 159 (SSFHKIAEDE…RLKTAVSNNF (137 aa)) is dimerization and phosphorylation. Composition is skewed to polar residues over residues 49–60 (NADNSAGGNNPL) and 119–138 (TSVSAESLNPTSAGSDSWTP). Residue Ser120 is modified to Phosphoserine. 3',5'-cyclic AMP contacts are provided by residues 160-291 (LFSH…EEVP), Glu238, Arg247, 292-405 (LLSS…TEYS), Glu359, and Arg368.

The protein belongs to the cAMP-dependent kinase regulatory chain family. Tetramer, composed of 2 regulatory (R) and 2 catalytic (C) subunits. In the presence of cAMP it dissociates into 2 active monomeric C subunits and an R dimer.

In Emericella nidulans (strain FGSC A4 / ATCC 38163 / CBS 112.46 / NRRL 194 / M139) (Aspergillus nidulans), this protein is cAMP-dependent protein kinase regulatory subunit (pkaR).